A 311-amino-acid polypeptide reads, in one-letter code: Chemotaxis protein CheV3 (311 aa).

Residues 13–164 enclose the CheW-like domain; the sequence is EIELVDFRIY…LESILDDLKL (152 aa). Residues 182 to 308 form the Response regulatory domain; the sequence is EVLFLDDSKT…FTEEISKILD (127 aa). 4-aspartylphosphate is present on D241.

In terms of biological role, plays a role in chemotaxis signal transduction system in order to colonize the host stomach. May act as a phosphate sink to control the flow of phosphate to CheAY. This chain is Chemotaxis protein CheV3, found in Helicobacter pylori (strain ATCC 700392 / 26695) (Campylobacter pylori).